The primary structure comprises 148 residues: HTH-type transcriptional regulator Ptr1 (148 aa).

The 62-residue stretch at Leu-2 to Glu-63 folds into the HTH asnC-type domain. A DNA-binding region (H-T-H motif) is located at residues Phe-21–Lys-40.

Homodimer.

Functionally, participates in positive as well as negative regulation of transcription. Binds to its own promoter. The polypeptide is HTH-type transcriptional regulator Ptr1 (ptr1) (Methanocaldococcus jannaschii (strain ATCC 43067 / DSM 2661 / JAL-1 / JCM 10045 / NBRC 100440) (Methanococcus jannaschii)).